Here is a 1039-residue protein sequence, read N- to C-terminus: Pleckstrin homology domain-containing family G member 5 (1039 aa).

Disordered regions lie at residues N58 to T105 and P185 to S277. Basic and acidic residues-rich tracts occupy residues P185–K199 and E217–S228. Residues S259–S277 are compositionally biased toward low complexity. A DH domain is found at H372–C564. The region spanning Q620 to N720 is the PH domain. Disordered stretches follow at residues Q739–G785 and T800–L836. Residues L744–E757 are compositionally biased toward acidic residues. 2 stretches are compositionally biased toward polar residues: residues S758–L776 and F811–S831. At T760 the chain carries Phosphothreonine. S765 carries the post-translational modification Phosphoserine. At T876 the chain carries Phosphothreonine. Residues S878, S903, and S908 each carry the phosphoserine modification. Positions P967–K989 are disordered.

In terms of assembly, interacts with GIPC1/synectin and RHOA. As to expression, selectively expressed in cortical and hippocampal neurons with prominent expression in the cell bodies and dendrites. Weakly expressed in rat fad pad ECs (RFPECs).

Its subcellular location is the cytoplasm. It localises to the perinuclear region. It is found in the cell membrane. The protein resides in the cell junction. The protein localises to the cell projection. Its subcellular location is the lamellipodium. Its function is as follows. Functions as a guanine exchange factor (GEF) for RAB26 and thus regulates autophagy of synaptic vesicles in axon terminal of motoneurons. Involved in the control of neuronal cell differentiation. Plays a role in angiogenesis through regulation of endothelial cells chemotaxis. Also affects the migration, adhesion, and matrix/bone degradation in macrophages and osteoclasts. This chain is Pleckstrin homology domain-containing family G member 5 (Plekhg5), found in Rattus norvegicus (Rat).